The primary structure comprises 550 residues: Chaperonin GroEL (550 aa).

ATP contacts are provided by residues 30 to 33, Lys51, 87 to 91, Gly415, and Asp495; these read TLGP and DGTTT.

The protein belongs to the chaperonin (HSP60) family. In terms of assembly, forms a cylinder of 14 subunits composed of two heptameric rings stacked back-to-back. Interacts with the co-chaperonin GroES.

The protein localises to the cytoplasm. The enzyme catalyses ATP + H2O + a folded polypeptide = ADP + phosphate + an unfolded polypeptide.. Together with its co-chaperonin GroES, plays an essential role in assisting protein folding. The GroEL-GroES system forms a nano-cage that allows encapsulation of the non-native substrate proteins and provides a physical environment optimized to promote and accelerate protein folding. This Shewanella piezotolerans (strain WP3 / JCM 13877) protein is Chaperonin GroEL.